The following is a 132-amino-acid chain: MVLSLCVMAPNRIVWNSEVREIILSTNSGQIGILPNHAPLLAALDMGVLKIRSDKQWSAMALMGGFAMIDNNRVIILVNEAERASEIDPEEARKSFQTAQAELAEAEGRRKLIEANLTFKRAKARLEASTIV.

It belongs to the ATPase epsilon chain family. As to quaternary structure, F-type ATPases have 2 components, CF(1) - the catalytic core - and CF(0) - the membrane proton channel. CF(1) has five subunits: alpha(3), beta(3), gamma(1), delta(1), epsilon(1). CF(0) has three main subunits: a, b and c.

It is found in the plastid. The protein resides in the chloroplast thylakoid membrane. In terms of biological role, produces ATP from ADP in the presence of a proton gradient across the membrane. The chain is ATP synthase epsilon chain, chloroplastic from Adiantum capillus-veneris (Maidenhair fern).